The following is a 496-amino-acid chain: Cytochrome P450 3A56 (496 aa).

Cys441 contributes to the heme binding site.

The protein belongs to the cytochrome P450 family. The cofactor is heme. Highly expressed in liver and intestine. Moderate expression in gill and spleen. Low expression in kidney, brain and heart.

The protein resides in the endoplasmic reticulum membrane. It localises to the microsome membrane. It catalyses the reaction an organic molecule + reduced [NADPH--hemoprotein reductase] + O2 = an alcohol + oxidized [NADPH--hemoprotein reductase] + H2O + H(+). Its function is as follows. Putative steroid 6-beta-hydroxylase. This chain is Cytochrome P450 3A56 (cyp3a56), found in Fundulus heteroclitus (Killifish).